Here is a 314-residue protein sequence, read N- to C-terminus: 2,3-dihydroxyphenylpropionate/2,3-dihydroxicinnamic acid 1,2-dioxygenase (314 aa).

Residue histidine 115 is the Proton donor of the active site. Histidine 179 (proton acceptor) is an active-site residue.

Belongs to the LigB/MhpB extradiol dioxygenase family. As to quaternary structure, homotetramer. Fe(2+) serves as cofactor.

It catalyses the reaction 3-(2,3-dihydroxyphenyl)propanoate + O2 = (2Z,4E)-2-hydroxy-6-oxonona-2,4-dienedioate + H(+). The enzyme catalyses (2E)-3-(2,3-dihydroxyphenyl)prop-2-enoate + O2 = (2Z,4E,7E)-2-hydroxy-6-oxonona-2,4,7-trienedioate + H(+). It functions in the pathway aromatic compound metabolism; 3-phenylpropanoate degradation. Functionally, catalyzes the non-heme iron(II)-dependent oxidative cleavage of 2,3-dihydroxyphenylpropionic acid and 2,3-dihydroxicinnamic acid into 2-hydroxy-6-ketononadienedioate and 2-hydroxy-6-ketononatrienedioate, respectively. The polypeptide is 2,3-dihydroxyphenylpropionate/2,3-dihydroxicinnamic acid 1,2-dioxygenase (Rhodococcus globerulus).